The primary structure comprises 556 residues: 2-succinyl-5-enolpyruvyl-6-hydroxy-3-cyclohexene-1-carboxylate synthase (556 aa).

The protein belongs to the TPP enzyme family. MenD subfamily. Homodimer. Mg(2+) serves as cofactor. Requires Mn(2+) as cofactor. Thiamine diphosphate is required as a cofactor.

It carries out the reaction isochorismate + 2-oxoglutarate + H(+) = 5-enolpyruvoyl-6-hydroxy-2-succinyl-cyclohex-3-ene-1-carboxylate + CO2. Its pathway is quinol/quinone metabolism; 1,4-dihydroxy-2-naphthoate biosynthesis; 1,4-dihydroxy-2-naphthoate from chorismate: step 2/7. The protein operates within quinol/quinone metabolism; menaquinone biosynthesis. Its function is as follows. Catalyzes the thiamine diphosphate-dependent decarboxylation of 2-oxoglutarate and the subsequent addition of the resulting succinic semialdehyde-thiamine pyrophosphate anion to isochorismate to yield 2-succinyl-5-enolpyruvyl-6-hydroxy-3-cyclohexene-1-carboxylate (SEPHCHC). The chain is 2-succinyl-5-enolpyruvyl-6-hydroxy-3-cyclohexene-1-carboxylate synthase from Shigella boydii serotype 4 (strain Sb227).